A 156-amino-acid chain; its full sequence is Small ribosomal subunit protein uS7 (156 aa).

The protein belongs to the universal ribosomal protein uS7 family. In terms of assembly, part of the 30S ribosomal subunit. Contacts proteins S9 and S11.

Functionally, one of the primary rRNA binding proteins, it binds directly to 16S rRNA where it nucleates assembly of the head domain of the 30S subunit. Is located at the subunit interface close to the decoding center, probably blocks exit of the E-site tRNA. This is Small ribosomal subunit protein uS7 from Crocosphaera subtropica (strain ATCC 51142 / BH68) (Cyanothece sp. (strain ATCC 51142)).